A 246-amino-acid polypeptide reads, in one-letter code: UDP-2,3-diacylglucosamine hydrolase (246 aa).

Mn(2+) is bound by residues Asp-8, His-10, Asp-41, Asn-79, and His-114. Substrate is bound at residue 79–80 (NR). Residues Asp-122, Ser-160, Asn-164, Lys-167, and His-195 each coordinate substrate. 2 residues coordinate Mn(2+): His-195 and His-197.

The protein belongs to the LpxH family. The cofactor is Mn(2+).

It is found in the cell inner membrane. It catalyses the reaction UDP-2-N,3-O-bis[(3R)-3-hydroxytetradecanoyl]-alpha-D-glucosamine + H2O = 2-N,3-O-bis[(3R)-3-hydroxytetradecanoyl]-alpha-D-glucosaminyl 1-phosphate + UMP + 2 H(+). Its pathway is glycolipid biosynthesis; lipid IV(A) biosynthesis; lipid IV(A) from (3R)-3-hydroxytetradecanoyl-[acyl-carrier-protein] and UDP-N-acetyl-alpha-D-glucosamine: step 4/6. Functionally, hydrolyzes the pyrophosphate bond of UDP-2,3-diacylglucosamine to yield 2,3-diacylglucosamine 1-phosphate (lipid X) and UMP by catalyzing the attack of water at the alpha-P atom. Involved in the biosynthesis of lipid A, a phosphorylated glycolipid that anchors the lipopolysaccharide to the outer membrane of the cell. The polypeptide is UDP-2,3-diacylglucosamine hydrolase (Chromohalobacter salexigens (strain ATCC BAA-138 / DSM 3043 / CIP 106854 / NCIMB 13768 / 1H11)).